The sequence spans 441 residues: Zinc finger protein ZIC 3 (441 aa).

The C2H2-type 1; atypical zinc finger occupies 222-257 (LSCKWLEESTMNHPQKTCDRTFSSMHELVTHMTMEH). The C2H2-type 2; atypical zinc finger occupies 266 to 293 (HICYWEECPRGGKSFKAKYKLVNHIRVH). 3 consecutive C2H2-type zinc fingers follow at residues 299 to 323 (FPCPFPGCGKIFARSENLKIHKRTH), 329 to 353 (FKCEFEGCDRRFANSSDRKKHMHVH), and 359 to 381 (YICKVCDKSYTHPSSLRKHMKVH). Residues 375–441 (RKHMKVHESQ…LPPNFNEWYV (67 aa)) form a disordered region. The segment covering 383 to 399 (SQGSDSSPAASSGYESA) has biased composition (low complexity). Residues 406–429 (SANSEEPSKNSSATHQTNNNSHNT) show a composition bias toward polar residues.

It belongs to the GLI C2H2-type zinc-finger protein family. As to expression, first detected at early gastrula (stage 10.25) in the dorsal lip and prospective neural plate. Also expressed in the mesoderm at early gastrulation, with expression strongest on the dorsal side. Mesodermal expression continues at stage 12 but is hardly detectable after stage 14. As gastrulation proceeds, expression decreases in the dorsal lip and increases in the prospective neural plate. At the neural plate stage (stage 14), expressed strongly in the prospective mesencephalon and anterior rhombencephalon, after which expression becomes stronger in the anterior neural folds. At early tailbud stage (stage 20), expression becomes restricted to the dorsal region of forebrain, midbrain and hindbrain, and weakly to the dorsal trunk. After mid-tailbud stage, expression decreases in the diencephalon, appears in the lateral mesoderm of the tailbud region and becomes restricted in the dorsal part of the neural tube.

It localises to the nucleus. It is found in the cytoplasm. Functionally, probably acts as a transcriptional activator. May bind to the minimal GLI-consensus sequence 5'-GGGTGGTC-3'. Can determine the ectodermal cell fate and promote the earliest step of neural and neural crest development. Involved in establishing left-right asymmetry in the embryo. This chain is Zinc finger protein ZIC 3 (zic3), found in Xenopus laevis (African clawed frog).